Consider the following 233-residue polypeptide: Large ribosomal subunit protein uL1 (233 aa).

This sequence belongs to the universal ribosomal protein uL1 family. Part of the 50S ribosomal subunit.

Binds directly to 23S rRNA. The L1 stalk is quite mobile in the ribosome, and is involved in E site tRNA release. In terms of biological role, protein L1 is also a translational repressor protein, it controls the translation of the L11 operon by binding to its mRNA. The chain is Large ribosomal subunit protein uL1 from Psychrobacter cryohalolentis (strain ATCC BAA-1226 / DSM 17306 / VKM B-2378 / K5).